An 83-amino-acid polypeptide reads, in one-letter code: uncharacterized protein (83 aa).

The segment at 1–83 (MCWKPKVKVP…KSSIRSKAFG (83 aa)) is disordered. Residues 43 to 55 (SVSSSEVPTTPSS) are compositionally biased toward low complexity.

This is an uncharacterized protein from Enterobacteria phage T3 (Bacteriophage T3).